The chain runs to 245 residues: 8-amino-3,8-dideoxy-manno-octulosonate cytidylyltransferase (245 aa).

This sequence belongs to the KdsB family.

Its subcellular location is the cytoplasm. The enzyme catalyses 8-amino-3,8-dideoxy-alpha-D-manno-octulosonate + CTP = CMP-8-amino-3,8-dideoxy-alpha-D-manno-oct-2-ulosonate + diphosphate. It participates in bacterial outer membrane biogenesis; lipopolysaccharide biosynthesis. In terms of biological role, activates KDO8N (a required 8-carbon sugar) for incorporation into bacterial lipopolysaccharide in the Shewanella genus. The protein is 8-amino-3,8-dideoxy-manno-octulosonate cytidylyltransferase of Shewanella putrefaciens (strain CN-32 / ATCC BAA-453).